Reading from the N-terminus, the 242-residue chain is uncharacterized protein (242 aa).

Polar residues predominate over residues 57–67; it reads SPTSQKTSASG. A disordered region spans residues 57–78; the sequence is SPTSQKTSASGQEEPDPLHDKS. One can recognise a DUF1279 domain in the interval 76–188; it reads DKSSGLIQRF…GYMSTPPPVK (113 aa). A helical membrane pass occupies residues 92-114; that stretch reads YGKVMIPVHLLTSTMWFGTFYYA. Residues 188–237 are a coiled coil; the sequence is KEYLQEKMEETKERISGKMEETKDRFSERMEETKDKFNEKLQETKDKVSF. Residues 198-236 are compositionally biased toward basic and acidic residues; it reads TKERISGKMEETKDRFSERMEETKDKFNEKLQETKDKVS. Residues 198 to 242 are disordered; that stretch reads TKERISGKMEETKDRFSERMEETKDKFNEKLQETKDKVSFRKKKE.

The protein resides in the membrane. This is an uncharacterized protein from Danio rerio (Zebrafish).